We begin with the raw amino-acid sequence, 178 residues long: Ribosome maturation factor RimM (178 aa).

Residues 101-178 (ADEYYWYQLV…VMRVEWDADF (78 aa)) enclose the PRC barrel domain.

This sequence belongs to the RimM family. As to quaternary structure, binds ribosomal protein uS19.

The protein resides in the cytoplasm. In terms of biological role, an accessory protein needed during the final step in the assembly of 30S ribosomal subunit, possibly for assembly of the head region. Essential for efficient processing of 16S rRNA. May be needed both before and after RbfA during the maturation of 16S rRNA. It has affinity for free ribosomal 30S subunits but not for 70S ribosomes. This chain is Ribosome maturation factor RimM, found in Pseudomonas putida (strain GB-1).